The chain runs to 555 residues: Protection of telomeres protein 1 (555 aa).

Belongs to the telombin family. As to quaternary structure, self-associates. Interacts with ccq1, poz1 and tpz1.

The protein localises to the nucleus. It localises to the chromosome. Its subcellular location is the telomere. Single-stranded telomeric DNA-binding protein that is required to protect the 3'-end telomeric overhang. It binds the consensus sequence 5'-GGTTAC-3'. Regulates telomerase and telomere length. This chain is Protection of telomeres protein 1 (pot1), found in Schizosaccharomyces pombe (strain 972 / ATCC 24843) (Fission yeast).